Consider the following 1877-residue polypeptide: Neuron navigator 1 (1877 aa).

Met1 is modified (N-acetylmethionine). Positions 1–59 (MLGSSVKSVQPEVELSSGGGDEGADEPRGAGRKAAAADGRGMLPKRAKAPGGGGGMAKA) are disordered. The segment covering 32 to 41 (RKAAAADGRG) has biased composition (low complexity). Phosphoserine occurs at positions 90, 142, and 152. The tract at residues 114–225 (DMAKAPKGLG…PVPSAKGQEE (112 aa)) is disordered. Phosphothreonine is present on Thr159. 2 positions are modified to phosphoserine: Ser194 and Ser199. The span at 205–214 (SSKAKAQKSS) shows a compositional bias: low complexity. Positions 255–280 (ESQRKRTVQNVLDLRQNLEETMSSLR) form a coiled coil. The interval 294–336 (YDSDDANPRSVSSLSNRSSPLSWRYGQSSPRLQAGDAPSVGGS) is disordered. Residues Ser296, Ser308, Ser312, Ser362, and Ser391 each carry the phosphoserine modification. Residues 301–315 (PRSVSSLSNRSSPLS) show a composition bias toward low complexity. 2 disordered regions span residues 386 to 839 (KSGY…PLPS) and 892 to 989 (MSLP…PMSL). 2 stretches are compositionally biased toward low complexity: residues 411 to 425 (DESS…DASD) and 433 to 448 (NASS…PTAS). Residues Ser452, Ser474, Ser476, and Ser490 each carry the phosphoserine modification. Over residues 476–486 (SEEKAPKKLEY) the composition is skewed to basic and acidic residues. Residues 503-519 (ERPESCDDSSKGGELKK) are compositionally biased toward basic and acidic residues. Ser528 is subject to Phosphoserine. Thr534 carries the phosphothreonine modification. Ser541 carries the phosphoserine modification. At Thr544 the chain carries Phosphothreonine. The span at 555-566 (GKPEGKATDKGK) shows a compositional bias: basic and acidic residues. Residue Thr572 is modified to Phosphothreonine. Over residues 581–591 (AGRDRLSDAKK) the composition is skewed to basic and acidic residues. Composition is skewed to polar residues over residues 615 to 635 (GTAT…QKSS) and 645 to 655 (RKTSLDVSNSA). Residue Ser648 is modified to Phosphoserine. The residue at position 688 (Arg688) is an Omega-N-methylarginine. Polar residues-rich tracts occupy residues 698-710 (IDPS…QGGL) and 724-733 (GRTTPAPVNQ). A coiled-coil region spans residues 731–756 (VNQTDREKEKAKAKAVALDSDNISLK). 5 positions are modified to phosphoserine: Ser750, Ser754, Ser760, Ser797, and Ser808. Polar residues predominate over residues 751 to 773 (DNISLKSIGSPESTPKNQASHPT). Residues 805 to 818 (NSNSLDLPSSSDTT) are compositionally biased toward low complexity. A compositionally biased stretch (pro residues) spans 902-913 (TPVPTPPAPPAA). Ser1000 carries the phosphoserine modification. Thr1006 carries the phosphothreonine modification. A coiled-coil region spans residues 1072–1163 (SSAEERMQSE…SEAQAVIQGA (92 aa)). Position 1170 is a phosphothreonine (Thr1170). Disordered stretches follow at residues 1172 to 1204 (KELR…KDAD), 1244 to 1306 (ATPD…EKKE), 1359 to 1383 (LKVA…LSSP), and 1810 to 1843 (KLYH…SLDS). The residue at position 1181 (Ser1181) is a Phosphoserine. The span at 1181-1200 (SSDSISSLNSITSHSSIGSS) shows a compositional bias: low complexity. The segment covering 1246–1264 (PDSSAPSSPKLQHGSTETA) has biased composition (polar residues). A Phosphoserine modification is found at Ser1265. Low complexity predominate over residues 1265–1275 (SPSIKSSTSSS). The stretch at 1303–1362 (EKKEVSELRSELWEKEMKLTDIRLEALNSAHQLDQLRETMHNMQLEVDLLKAENDRLKVA) forms a coiled coil. The span at 1366-1383 (SSGSTPGQVPGSSALSSP) shows a compositional bias: polar residues. A Phosphoserine modification is found at Ser1382.

It belongs to the Nav/unc-53 family. In terms of assembly, interacts with tubulin. As to expression, broadly expressed at low levels. Expressed at high levels in heart, skeletal muscle and placenta.

It is found in the cytoplasm. The protein resides in the cytoskeleton. Functionally, may be involved in neuronal migration. The sequence is that of Neuron navigator 1 (NAV1) from Homo sapiens (Human).